The sequence spans 1057 residues: Probable sucrose-phosphate synthase 1 (1057 aa).

The segment covering 103-115 has biased composition (basic and acidic residues); sequence RRLERERGRREAT. Disordered regions lie at residues 103–143, 439–459, and 670–693; these read RRLE…STRS, PQDGDMDGETEGNEDNPASPD, and RHPQWQRTDDGGETSESDSPGDSL. The segment covering 442 to 452 has biased composition (acidic residues); that stretch reads GDMDGETEGNE.

This sequence belongs to the glycosyltransferase 1 family. As to quaternary structure, homodimer or homotetramer.

The enzyme catalyses beta-D-fructose 6-phosphate + UDP-alpha-D-glucose = sucrose 6(F)-phosphate + UDP + H(+). The protein operates within glycan biosynthesis; sucrose biosynthesis; sucrose from D-fructose 6-phosphate and UDP-alpha-D-glucose: step 1/2. With respect to regulation, activity is regulated by phosphorylation and moderated by concentration of metabolites and light. In terms of biological role, plays a role in photosynthetic sucrose synthesis by catalyzing the rate-limiting step of sucrose biosynthesis from UDP-glucose and fructose- 6-phosphate. Involved in the regulation of carbon partitioning in the leaves of plants. May regulate the synthesis of sucrose and therefore play a major role as a limiting factor in the export of photoassimilates out of the leaf. Plays a role for sucrose availability that is essential for plant growth and fiber elongation. The protein is Probable sucrose-phosphate synthase 1 (SPS1) of Citrus unshiu (Satsuma mandarin).